Here is a 269-residue protein sequence, read N- to C-terminus: Ribosomal RNA small subunit methyltransferase A (269 aa).

S-adenosyl-L-methionine is bound by residues asparagine 20, leucine 22, glycine 47, glutamate 68, aspartate 90, and asparagine 110.

This sequence belongs to the class I-like SAM-binding methyltransferase superfamily. rRNA adenine N(6)-methyltransferase family. RsmA subfamily.

It is found in the cytoplasm. It catalyses the reaction adenosine(1518)/adenosine(1519) in 16S rRNA + 4 S-adenosyl-L-methionine = N(6)-dimethyladenosine(1518)/N(6)-dimethyladenosine(1519) in 16S rRNA + 4 S-adenosyl-L-homocysteine + 4 H(+). In terms of biological role, specifically dimethylates two adjacent adenosines (A1518 and A1519) in the loop of a conserved hairpin near the 3'-end of 16S rRNA in the 30S particle. May play a critical role in biogenesis of 30S subunits. This is Ribosomal RNA small subunit methyltransferase A from Chlorobium phaeobacteroides (strain DSM 266 / SMG 266 / 2430).